A 345-amino-acid polypeptide reads, in one-letter code: Ephrin-B1 (345 aa).

The first 24 residues, 1–24 (MARPGQRWLSKWLVAMVVLTLCRL), serve as a signal peptide directing secretion. The Extracellular portion of the chain corresponds to 25–236 (ATPLAKNLEP…GDSDSFFNSK (212 aa)). Residues 30–164 (KNLEPVSWSS…TRTMKIVMKV (135 aa)) form the Ephrin RBD domain. 2 disulfides stabilise this stretch: Cys-64/Cys-101 and Cys-89/Cys-153. Residue Asn-139 is glycosylated (N-linked (GlcNAc...) asparagine). Residues 169–227 (NAVTPEQLTTSRPSKESDNTVKTATQAPGRGSQGDSDGKHETVNQEEKSGPGAGGGGSG) form a disordered region. Positions 204-217 (SDGKHETVNQEEKS) are enriched in basic and acidic residues. Residues 237–257 (VALFAAVGAGCVIFLLIIIFL) form a helical membrane-spanning segment. The Cytoplasmic segment spans residues 258-345 (TVLLLKLRKR…QSPANIYYKV (88 aa)). Positions 259-272 (VLLLKLRKRHRKHT) match the Nuclear localization signal motif. The tract at residues 262-293 (LKLRKRHRKHTQQRAAALSLSTLASPKGGSGT) is interaction with ZHX2. Residues Ser-280 and Ser-286 each carry the phosphoserine modification. Positions 343–345 (YKV) match the PDZ-binding motif.

It belongs to the ephrin family. Interacts (via PDZ-binding motif) with GRIP1 and GRIP2 (via PDZ domain 6). Interacts with TLE1. The intracellular domain peptide interacts with ZHX2; the interaction enhances ZHX2 transcriptional repression activity. Inducible phosphorylation of tyrosine residues in the cytoplasmic domain. In terms of processing, proteolytically processed. The ectodomain is cleaved, probably by a metalloprotease, to produce a membrane-tethered C-terminal fragment. This fragment is then further processed by the gamma-secretase complex to yield a soluble intracellular domain peptide which can translocate to the nucleus. The intracellular domain peptide is highly labile suggesting that it is targeted for degradation by the proteasome. As to expression, expressed on lateral floor plate cells, specifically on commissural axon segments that have passed through the floor plate. Expressed in cells of the retinal ganglion cell layer during retinal axon guidance to the optic disk. Expressed in myogenic progenitor cells.

It is found in the cell membrane. It localises to the membrane raft. Its subcellular location is the nucleus. Cell surface transmembrane ligand for Eph receptors, a family of receptor tyrosine kinases which are crucial for migration, repulsion and adhesion during neuronal, vascular and epithelial development. Binding to Eph receptors residing on adjacent cells leads to contact-dependent bidirectional signaling into neighboring cells. Shows high affinity for the receptor tyrosine kinase EPHB1/ELK. Can also bind EPHB2 and EPHB3. Binds to, and induces the collapse of, commissural axons/growth cones in vitro. May play a role in constraining the orientation of longitudinally projecting axons. The polypeptide is Ephrin-B1 (Efnb1) (Mus musculus (Mouse)).